A 234-amino-acid polypeptide reads, in one-letter code: Large ribosomal subunit protein uL1 (234 aa).

The protein belongs to the universal ribosomal protein uL1 family. Part of the 50S ribosomal subunit.

Binds directly to 23S rRNA. The L1 stalk is quite mobile in the ribosome, and is involved in E site tRNA release. Its function is as follows. Protein L1 is also a translational repressor protein, it controls the translation of the L11 operon by binding to its mRNA. The protein is Large ribosomal subunit protein uL1 of Serratia marcescens.